The chain runs to 548 residues: Sesquiterpene synthase 9 (548 aa).

Positions 300, 304, and 453 each coordinate Mg(2+). The DDXXD motif signature appears at 300–304 (DDTFD).

It belongs to the terpene synthase family. Tpsa subfamily. Mg(2+) is required as a cofactor. Mn(2+) serves as cofactor. As to expression, mostly expressed in stem and trichomes, to a lower extent in roots, leaves and flowers and, at low levels, in fruits.

It is found in the cytoplasm. It catalyses the reaction (2E,6E)-farnesyl diphosphate = germacrene C + diphosphate. The catalysed reaction is (2E)-geranyl diphosphate = terpinolene + diphosphate. The enzyme catalyses (2E)-geranyl diphosphate = limonene + diphosphate. It carries out the reaction (2E)-geranyl diphosphate = beta-myrcene + diphosphate. It catalyses the reaction (2Z,6Z)-farnesyl diphosphate = germacrene C + diphosphate. It participates in secondary metabolite biosynthesis; terpenoid biosynthesis. In terms of biological role, involved in the biosynthesis of germacrene C, one of the most abundant sesquiterpene in the leaf oil of tomato. Produces mainly germacrene C, but also smaller amounts of germacrene A, B and D when used with farnesyl diphosphate (FPP) as substrate; able to use both (2E,6E)-farnesyl diphosphate ((EE)-FPP) and (2Z,6Z)-farnesyl diphosphate ((ZZ)-FPP). No or low activity with geranylgeranyl diphosphate (GGPP). Can act with a low efficiency as a monoterpene synthase with geranyl diphosphate (GPP) as substrate, thus producing beta-myrcene, limonene and terpinolene. The polypeptide is Sesquiterpene synthase 9 (Solanum lycopersicum (Tomato)).